We begin with the raw amino-acid sequence, 501 residues long: Beta-secretase 1 (501 aa).

An N-terminal signal peptide occupies residues 1–21; sequence MAPALRWLLLWVGSGMLPAQG. A propeptide spanning residues 22 to 45 is cleaved from the precursor; sequence THLGIRLPLRSGLAGPPLGLRLPR. Residues 22 to 457 lie on the Extracellular side of the membrane; the sequence is THLGIRLPLR…PQTDESTLMT (436 aa). In terms of domain architecture, Peptidase A1 spans 75–416; sequence YYVEMTVGSP…DRARKRIGFA (342 aa). Residue Asp93 is part of the active site. The residue at position 126 (Lys126) is an N6-acetyllysine. 3 N-linked (GlcNAc...) asparagine glycosylation sites follow: Asn153, Asn172, and Asn223. 3 disulfides stabilise this stretch: Cys216-Cys420, Cys278-Cys443, and Cys330-Cys380. N6-acetyllysine occurs at positions 275, 279, and 285. Asp289 is an active-site residue. An N6-acetyllysine mark is found at Lys299, Lys300, and Lys307. N-linked (GlcNAc...) asparagine glycosylation is present at Asn354. The chain crosses the membrane as a helical span at residues 458 to 478; it reads IAYVMAAICALFMLPLCLMVC. 4 S-palmitoyl cysteine lipidation sites follow: Cys474, Cys478, Cys482, and Cys485. At 479-501 the chain is on the cytoplasmic side; sequence QWRCLRCLRHQHDDFADDISLLK. The interval 479–501 is interaction with RTN3; sequence QWRCLRCLRHQHDDFADDISLLK. Positions 496–500 match the DXXLL motif; the sequence is DISLL. Ser498 carries the post-translational modification Phosphoserine. Residue Lys501 forms a Glycyl lysine isopeptide (Lys-Gly) (interchain with G-Cter in ubiquitin) linkage.

Belongs to the peptidase A1 family. As to quaternary structure, monomer. Interacts (via DXXLL motif) with GGA1, GGA2 and GGA3 (via their VHS domain); the interaction highly increases when BACE1 is phosphorylated at Ser-498. Interacts with RTN1; RTN2; RTN3 and RTN4; the interaction leads to inhibition of amyloid precursor protein processing. Interacts with SNX6. Interacts with PCSK9. Interacts with NAT8 and NAT8B. Interacts with BIN1. Interacts (via extracellular domain) with ADAM10 (via extracellular domain). Interacts with SORL1; this interaction may affect binding with APP and hence reduce APP cleavage. Interacts with NRDC AND NRG1. Palmitoylation mediates lipid raft localization. In terms of processing, acetylated in the endoplasmic reticulum at Lys-126, Lys-275, Lys-279, Lys-285, Lys-299, Lys-300 and Lys-307. Acetylation by NAT8 and NAT8B is transient and deacetylation probably occurs in the Golgi. Acetylation regulates the maturation, the transport to the plasma membrane, the stability and the expression of the protein. Post-translationally, ubiquitinated at Lys-501, ubiquitination leads to lysosomal degradation. Monoubiquitinated and 'Lys-63'-linked polyubitinated. Deubiquitnated by USP8; inhibits lysosomal degradation. Phosphorylation at Ser-498 is required for interaction with GGA1 and retrograded transport from endosomal compartments to the trans-Golgi network. Non-phosphorylated BACE1 enters a direct recycling route to the cell surface. In terms of processing, N-Glycosylated. Addition of a bisecting N-acetylglucosamine by MGAT3 blocks lysosomal targeting, further degradation and is required for maintaining stability under stress conditions.

Its subcellular location is the cell membrane. The protein resides in the golgi apparatus. It localises to the trans-Golgi network. It is found in the endoplasmic reticulum. The protein localises to the endosome. Its subcellular location is the cell surface. The protein resides in the cytoplasmic vesicle membrane. It localises to the membrane raft. It is found in the lysosome. The protein localises to the late endosome. Its subcellular location is the early endosome. The protein resides in the recycling endosome. It localises to the cell projection. It is found in the axon. The protein localises to the dendrite. It catalyses the reaction Broad endopeptidase specificity. Cleaves Glu-Val-Asn-Leu-|-Asp-Ala-Glu-Phe in the Swedish variant of Alzheimer's amyloid precursor protein.. Its activity is regulated as follows. Inhibited by RTN3 and RTN4. Responsible for the proteolytic processing of the amyloid precursor protein (APP). Cleaves at the N-terminus of the A-beta peptide sequence, between residues 671 and 672 of APP, leads to the generation and extracellular release of beta-cleaved soluble APP, and a corresponding cell-associated C-terminal fragment which is later released by gamma-secretase. Cleaves CHL1. This chain is Beta-secretase 1 (Bace1), found in Rattus norvegicus (Rat).